The sequence spans 114 residues: ATP synthase subunit c (114 aa).

A run of 2 helical transmembrane segments spans residues 31–51 and 88–108; these read AVFYGALAIGAGVAIGAAAGG and IETFVLYALLIAIIFIFTGIF.

The protein belongs to the ATPase C chain family. In terms of assembly, F-type ATPases have 2 components, F(1) - the catalytic core - and F(0) - the membrane proton channel. F(1) has five subunits: alpha(3), beta(3), gamma(1), delta(1), epsilon(1). F(0) has three main subunits: a(1), b(2) and c(10-14). The alpha and beta chains form an alternating ring which encloses part of the gamma chain. F(1) is attached to F(0) by a central stalk formed by the gamma and epsilon chains, while a peripheral stalk is formed by the delta and b chains.

The protein resides in the cell inner membrane. F(1)F(0) ATP synthase produces ATP from ADP in the presence of a proton or sodium gradient. F-type ATPases consist of two structural domains, F(1) containing the extramembraneous catalytic core and F(0) containing the membrane proton channel, linked together by a central stalk and a peripheral stalk. During catalysis, ATP synthesis in the catalytic domain of F(1) is coupled via a rotary mechanism of the central stalk subunits to proton translocation. In terms of biological role, key component of the F(0) channel; it plays a direct role in translocation across the membrane. A homomeric c-ring of between 10-14 subunits forms the central stalk rotor element with the F(1) delta and epsilon subunits. The protein is ATP synthase subunit c of Sulfurihydrogenibium sp. (strain YO3AOP1).